A 287-amino-acid chain; its full sequence is Diaminopimelate epimerase (287 aa).

Substrate contacts are provided by N15 and N66. C75 (proton donor) is an active-site residue. Substrate-binding positions include 76 to 77 (GN), N170, N203, and 221 to 222 (ER). Residue C230 is the Proton acceptor of the active site. 231-232 (GT) lines the substrate pocket.

This sequence belongs to the diaminopimelate epimerase family. As to quaternary structure, homodimer.

Its subcellular location is the cytoplasm. It catalyses the reaction (2S,6S)-2,6-diaminopimelate = meso-2,6-diaminopimelate. It functions in the pathway amino-acid biosynthesis; L-lysine biosynthesis via DAP pathway; DL-2,6-diaminopimelate from LL-2,6-diaminopimelate: step 1/1. Catalyzes the stereoinversion of LL-2,6-diaminopimelate (L,L-DAP) to meso-diaminopimelate (meso-DAP), a precursor of L-lysine and an essential component of the bacterial peptidoglycan. The chain is Diaminopimelate epimerase from Desulfovibrio desulfuricans (strain ATCC 27774 / DSM 6949 / MB).